Reading from the N-terminus, the 334-residue chain is G-protein coupled receptor 12 (334 aa).

The Extracellular portion of the chain corresponds to 1 to 48 (MNEDPKVNLSGLPRDCIDAGAPENISAAVPSQGSVAESEPELVVNPWD). Asparagine 8 and asparagine 24 each carry an N-linked (GlcNAc...) asparagine glycan. The chain crosses the membrane as a helical span at residues 49 to 69 (IVLCSSGTLICCENAVVVLII). Over 70-78 (FHSPSLRAP) the chain is Cytoplasmic. Residues 79–99 (MFLLIGSLALADLLAGLGLII) traverse the membrane as a helical segment. Residues 100–113 (NFVFAYLLQSEATK) are Extracellular-facing. A helical membrane pass occupies residues 114-134 (LVTIGLIVASFSASVCSLLAI). At 135 to 158 (TVDRYLSLYYALTYHSERTVTFTY) the chain is on the cytoplasmic side. A helical transmembrane segment spans residues 159-179 (VMLVMLWGTSICLGLLPVMGW). The Extracellular portion of the chain corresponds to 180–199 (NCLRDESTCSVVRPLTKNNA). Residues 200–220 (AILSISFLFMFALMLQLYIQI) form a helical membrane-spanning segment. The Cytoplasmic segment spans residues 221–252 (CKIVMRHAHQIALQHHFLATSHYVTTRKGVST). The helical transmembrane segment at 253-273 (LALILGTFAACWMPFTLYSLI) threads the bilayer. The Extracellular segment spans residues 274-282 (ADYTYPSIY). Residues 283 to 303 (TYATLLPATYNSIINPVIYAF) form a helical membrane-spanning segment. The Cytoplasmic portion of the chain corresponds to 304 to 334 (RNQEIQKALCLICCGCIPSSLSQRARSPSDV). Residue cysteine 317 is the site of S-palmitoyl cysteine attachment. Phosphoserine occurs at positions 330 and 332.

Belongs to the G-protein coupled receptor 1 family. In terms of tissue distribution, expressed predominantly in the forebrain and a lesser extent in the hindbrain. Lower expression in the liver.

It is found in the cell membrane. In terms of biological role, receptor with constitutive G(s) signaling activity that stimulates cyclic AMP production. Promotes neurite outgrowth and blocks myelin inhibition in neurons. This Mus musculus (Mouse) protein is G-protein coupled receptor 12 (Gpr12).